The sequence spans 57 residues: Large ribosomal subunit protein bL32c (57 aa).

Belongs to the bacterial ribosomal protein bL32 family.

It localises to the plastid. It is found in the chloroplast. The protein is Large ribosomal subunit protein bL32c of Vitis vinifera (Grape).